A 532-amino-acid chain; its full sequence is Metal-staphylopine-binding protein CntA (532 aa).

A signal peptide spans 1–20; sequence MRKLTKMSAMLLASGLILTG. Residue C21 is the site of N-palmitoyl cysteine attachment. C21 carries S-diacylglycerol cysteine lipidation. Residues R165, R418, and N448 each coordinate staphylopine.

Belongs to the bacterial solute-binding protein 5 family. The complex is composed of two ATP-binding proteins (CntD and CntF), two transmembrane proteins (CntB and CntC) and a solute-binding protein (CntA).

Its subcellular location is the cell membrane. Functionally, part of the ABC transporter complex CntABCDF (Opp1) involved in the uptake of metal in complex with the metallophore staphylopine (StP). May be involved in the import of a large array of divalent metals ions such as nickel, cobalt, zinc, copper and iron. Binds the metal via the metallophore StP, and transfers the StP-metal complex to the membrane-bound permease. The polypeptide is Metal-staphylopine-binding protein CntA (Staphylococcus aureus (strain Mu50 / ATCC 700699)).